A 290-amino-acid chain; its full sequence is Shikimate dehydrogenase (NADP(+)) (290 aa).

Residues 22 to 24 (SLS) and T68 contribute to the shikimate site. The Proton acceptor role is filled by K72. N93 and D108 together coordinate shikimate. Residues 133–137 (GSGGS) and I228 each bind NADP(+). Shikimate is bound at residue Y230. G251 is a binding site for NADP(+).

It belongs to the shikimate dehydrogenase family. Homodimer.

The enzyme catalyses shikimate + NADP(+) = 3-dehydroshikimate + NADPH + H(+). The protein operates within metabolic intermediate biosynthesis; chorismate biosynthesis; chorismate from D-erythrose 4-phosphate and phosphoenolpyruvate: step 4/7. Functionally, involved in the biosynthesis of the chorismate, which leads to the biosynthesis of aromatic amino acids. Catalyzes the reversible NADPH linked reduction of 3-dehydroshikimate (DHSA) to yield shikimate (SA). The chain is Shikimate dehydrogenase (NADP(+)) from Leptospira borgpetersenii serovar Hardjo-bovis (strain JB197).